Reading from the N-terminus, the 792-residue chain is MLLRTVSSATAETTAALISKNTYLDFFKRSTSISHLAQTHAQIILHGFRNDISLLTKLTQRLSDLGAIYYARDIFLSVQRPDVFLFNVLMRGFSVNESPHSSLSVFAHLRKSTDLKPNSSTYAFAISAASGFRDDRAGRVIHGQAVVDGCDSELLLGSNIVKMYFKFWRVEDARKVFDRMPEKDTILWNTMISGYRKNEMYVESIQVFRDLINESCTRLDTTTLLDILPAVAELQELRLGMQIHSLATKTGCYSHDYVLTGFISLYSKCGKIKMGSALFREFRKPDIVAYNAMIHGYTSNGETELSLSLFKELMLSGARLRSSTLVSLVPVSGHLMLIYAIHGYCLKSNFLSHASVSTALTTVYSKLNEIESARKLFDESPEKSLPSWNAMISGYTQNGLTEDAISLFREMQKSEFSPNPVTITCILSACAQLGALSLGKWVHDLVRSTDFESSIYVSTALIGMYAKCGSIAEARRLFDLMTKKNEVTWNTMISGYGLHGQGQEALNIFYEMLNSGITPTPVTFLCVLYACSHAGLVKEGDEIFNSMIHRYGFEPSVKHYACMVDILGRAGHLQRALQFIEAMSIEPGSSVWETLLGACRIHKDTNLARTVSEKLFELDPDNVGYHVLLSNIHSADRNYPQAATVRQTAKKRKLAKAPGYTLIEIGETPHVFTSGDQSHPQVKEIYEKLEKLEGKMREAGYQPETELALHDVEEEERELMVKVHSERLAIAFGLIATEPGTEIRIIKNLRVCLDCHTVTKLISKITERVIVVRDANRFHHFKDGVCSCGDYW.

PPR repeat units lie at residues aspartate 51–proline 81, aspartate 82–proline 117, asparagine 118–serine 152, glutamate 153–lysine 183, aspartate 184–arginine 218, aspartate 220–serine 254, histidine 255–proline 285, aspartate 286–leucine 320, arginine 321–serine 352, histidine 353–lysine 383, serine 384–proline 418, asparagine 419–serine 453, serine 454–lysine 484, asparagine 485–proline 519, threonine 520–proline 555, and serine 556–glutamate 586. The type E motif stretch occupies residues valine 591–glycine 666. Residues glutamate 667 to arginine 697 are type E(+) motif. Positions glutamate 698–tryptophan 792 are type DYW motif.

It belongs to the PPR family. PCMP-H subfamily.

This is Pentatricopeptide repeat-containing protein At4g30700 (DYW9) from Arabidopsis thaliana (Mouse-ear cress).